Reading from the N-terminus, the 111-residue chain is Probable 4-amino-4-deoxy-L-arabinose-phosphoundecaprenol flippase subunit ArnE (111 aa).

3 helical membrane passes run 38–58 (LWLGLALICMGAAMVLWLLVL), 61–81 (LPVGIAYPMLSLNFVWVTLAA), and 91–111 (PRHWLGVALIISGIIILGSAA). The EamA domain occupies 40–109 (LGLALICMGA…IISGIIILGS (70 aa)).

It belongs to the ArnE family. As to quaternary structure, heterodimer of ArnE and ArnF.

It is found in the cell inner membrane. It participates in bacterial outer membrane biogenesis; lipopolysaccharide biosynthesis. In terms of biological role, translocates 4-amino-4-deoxy-L-arabinose-phosphoundecaprenol (alpha-L-Ara4N-phosphoundecaprenol) from the cytoplasmic to the periplasmic side of the inner membrane. The chain is Probable 4-amino-4-deoxy-L-arabinose-phosphoundecaprenol flippase subunit ArnE from Salmonella heidelberg (strain SL476).